The following is a 476-amino-acid chain: E3 SUMO-protein ligase EGR2 (476 aa).

A compositionally biased stretch (low complexity) spans 127–141 (PASTTASSSVTSASP). Residues 127-178 (PASTTASSSVTSASPNPLATGPLGVCTMSQTQPDLDHLYSPPPPPPPYSGCA) are disordered. Residues 162 to 165 (DHLY) carry the HCFC1-binding-motif (HBM) motif. K247 is subject to N6-acetyllysine; by EP300. Disordered stretches follow at residues 275–300 (GPSAGVTGPGASGGSEGPRLPGSSSA) and 318–341 (RPILRPRKYPNRPSKTPVHERPYP). A compositionally biased stretch (gly residues) spans 281–290 (TGPGASGGSE). 3 consecutive C2H2-type zinc fingers follow at residues 340–364 (YPCPAEGCDRRFSRSDELTRHIRIH), 370–392 (FQCRICMRNFSRSDHLTTHIRTH), and 398–420 (FACDYCGRKFARSDERKRHTKIH). The disordered stretch occupies residues 412–476 (ERKRHTKIHL…APCSSRTRTP (65 aa)). Over residues 415 to 425 (RHTKIHLRQKE) the composition is skewed to basic residues. Residues 429–476 (SAPSASVPAPSTASCSGGVQPGGTLCSSNSSSLGGGPLAPCSSRTRTP) show a composition bias toward low complexity.

It belongs to the EGR C2H2-type zinc-finger protein family. Interacts with HCFC1. Interacts with WWP2. Interacts with UBC9. Interacts with CITED1. Interacts (via phosphorylated form) with SFN. Ubiquitinated by WWP2 leading to proteasomal degradation. Post-translationally, acetylated at Lys-247. May be deacetylated by HDAC6, HDAC10 or SIRT1.

Its subcellular location is the nucleus. The protein operates within protein modification; protein sumoylation. Sequence-specific DNA-binding transcription factor. Plays a role in hindbrain segmentation by regulating the expression of a subset of homeobox containing genes and in Schwann cell myelination by regulating the expression of genes involved in the formation and maintenance of myelin. Binds to two EGR2-consensus sites EGR2A (5'-CTGTAGGAG-3') and EGR2B (5'-ATGTAGGTG-3') in the HOXB3 enhancer and promotes HOXB3 transcriptional activation. Binds to specific DNA sites located in the promoter region of HOXA4, HOXB2 and ERBB2. Regulates hindbrain segmentation by controlling the expression of Hox genes, such as HOXA4, HOXB3 and HOXB2, and thereby specifying odd and even rhombomeres. Promotes the expression of HOXB3 in the rhombomere r5 in the hindbrain. Regulates myelination in the peripheral nervous system after birth, possibly by regulating the expression of myelin proteins, such as MPZ, and by promoting the differentiation of Schwann cells. Involved in the development of the jaw openener musculature, probably by playing a role in its innervation through trigeminal motor neurons. May play a role in adipogenesis, possibly by regulating the expression of CEBPB. Its function is as follows. E3 SUMO-protein ligase helping SUMO1 conjugation to its coregulators NAB1 and NAB2, whose sumoylation down-regulates EGR2 transcriptional activity. The protein is E3 SUMO-protein ligase EGR2 (EGR2) of Homo sapiens (Human).